A 609-amino-acid chain; its full sequence is Pogo transposable element with KRAB domain (609 aa).

Disordered stretches follow at residues 1–28 (MEST…ELED) and 100–127 (EGEE…SDVK). Residues 8–28 (LNLSLKEEEEEEEIQSRELED) are a coiled coil. Residue Lys13 forms a Glycyl lysine isopeptide (Lys-Gly) (interchain with G-Cter in SUMO2) linkage. Residues 47–118 (ALFDEVAIYF…DEWQLQGGTS (72 aa)) form the KRAB domain. Positions 108–119 (SDEWQLQGGTSA) are enriched in polar residues. The region spanning 250 to 323 (AFRGPKNGRF…MRRYDLSLRH (74 aa)) is the HTH CENPB-type domain. In terms of domain architecture, DDE-1 spans 353–567 (HDYEVAQMGN…ISSESIVQGF (215 aa)). A Glycyl lysine isopeptide (Lys-Gly) (interchain with G-Cter in SUMO2) cross-link involves residue Lys384. A disordered region spans residues 588–609 (SELPGGGEPPKDCDTESMAESN).

It is found in the nucleus. This chain is Pogo transposable element with KRAB domain (POGK), found in Homo sapiens (Human).